The chain runs to 418 residues: Elongation factor Tu, chloroplastic (418 aa).

The region spanning 10-214 (KPHVNIGTIG…NVDSYIPTPQ (205 aa)) is the tr-type G domain. Residues 19-26 (GHVDHGKT) form a G1 region. 19-26 (GHVDHGKT) provides a ligand contact to GTP. Thr-26 is a Mg(2+) binding site. Positions 60 to 64 (GITIN) are G2. The segment at 81–84 (DCPG) is G3. GTP contacts are provided by residues 81-85 (DCPGH) and 136-139 (NKED). The segment at 136–139 (NKED) is G4. A G5 region spans residues 174–176 (SAL).

The protein belongs to the TRAFAC class translation factor GTPase superfamily. Classic translation factor GTPase family. EF-Tu/EF-1A subfamily.

Its subcellular location is the plastid. The protein localises to the chloroplast. It catalyses the reaction GTP + H2O = GDP + phosphate + H(+). GTP hydrolase that promotes the GTP-dependent binding of aminoacyl-tRNA to the A-site of ribosomes during protein biosynthesis. The protein is Elongation factor Tu, chloroplastic (tufA) of Chlamydomonas reinhardtii (Chlamydomonas smithii).